The primary structure comprises 596 residues: Elongation factor 4 (596 aa).

The tr-type G domain maps to 2 to 184; sequence KHIRNFSIIA…TIVAQIPSPE (183 aa). Residues 14–19 and 131–134 contribute to the GTP site; these read DHGKST and NKID.

This sequence belongs to the TRAFAC class translation factor GTPase superfamily. Classic translation factor GTPase family. LepA subfamily.

The protein localises to the cell inner membrane. The catalysed reaction is GTP + H2O = GDP + phosphate + H(+). Required for accurate and efficient protein synthesis under certain stress conditions. May act as a fidelity factor of the translation reaction, by catalyzing a one-codon backward translocation of tRNAs on improperly translocated ribosomes. Back-translocation proceeds from a post-translocation (POST) complex to a pre-translocation (PRE) complex, thus giving elongation factor G a second chance to translocate the tRNAs correctly. Binds to ribosomes in a GTP-dependent manner. This chain is Elongation factor 4, found in Shewanella amazonensis (strain ATCC BAA-1098 / SB2B).